Reading from the N-terminus, the 1058-residue chain is Ubiquitin-like modifier-activating enzyme 1 Y (1058 aa).

The tract at residues 1-22 (MSSSVLSKKRKVSGPDSSLDSS) is disordered. Residues Ala-477, Asp-503, Arg-514, Lys-527, and 575–576 (DN) each bind ATP. Cys-631 functions as the Glycyl thioester intermediate in the catalytic mechanism.

It belongs to the ubiquitin-activating E1 family. As to quaternary structure, monomer. In terms of tissue distribution, expressed in testis in A spermatogonia and spermatids but not (or at very low levels) in pachytene spermatocytes. Also expressed in Y-bearing ovaries and at very low levels in adrenal gland.

The catalysed reaction is ATP + ubiquitin + [E1 ubiquitin-activating enzyme]-L-cysteine = AMP + diphosphate + S-ubiquitinyl-[E1 ubiquitin-activating enzyme]-L-cysteine.. The protein operates within protein modification; protein ubiquitination. Functionally, activates ubiquitin by first adenylating its C-terminal glycine residue with ATP, and thereafter linking this residue to the side chain of a cysteine residue in E1, yielding a ubiquitin-E1 thioester and free AMP. The Y chromosome form could be involved in the survival and proliferation of differentiating spermatogonia. The sequence is that of Ubiquitin-like modifier-activating enzyme 1 Y (Uba1y) from Mus musculus (Mouse).